The primary structure comprises 444 residues: Glutamyl-tRNA reductase (444 aa).

Substrate is bound by residues 49–52 (TCNR), serine 109, 114–116 (ETQ), and glutamine 120. The active-site Nucleophile is cysteine 50. Residue 189 to 194 (GAGKMG) coordinates NADP(+).

It belongs to the glutamyl-tRNA reductase family. In terms of assembly, homodimer.

The enzyme catalyses (S)-4-amino-5-oxopentanoate + tRNA(Glu) + NADP(+) = L-glutamyl-tRNA(Glu) + NADPH + H(+). Its pathway is porphyrin-containing compound metabolism; protoporphyrin-IX biosynthesis; 5-aminolevulinate from L-glutamyl-tRNA(Glu): step 1/2. In terms of biological role, catalyzes the NADPH-dependent reduction of glutamyl-tRNA(Glu) to glutamate 1-semialdehyde (GSA). The protein is Glutamyl-tRNA reductase of Bacillus anthracis (strain A0248).